A 312-amino-acid chain; its full sequence is Ribosomal protein L11 methyltransferase (312 aa).

Residues threonine 162, glycine 183, aspartate 205, and asparagine 248 each contribute to the S-adenosyl-L-methionine site.

It belongs to the methyltransferase superfamily. PrmA family.

The protein resides in the cytoplasm. The catalysed reaction is L-lysyl-[protein] + 3 S-adenosyl-L-methionine = N(6),N(6),N(6)-trimethyl-L-lysyl-[protein] + 3 S-adenosyl-L-homocysteine + 3 H(+). Its function is as follows. Methylates ribosomal protein L11. In Bacillus cereus (strain Q1), this protein is Ribosomal protein L11 methyltransferase.